Reading from the N-terminus, the 486-residue chain is Cardiolipin synthase A (486 aa).

The next 2 membrane-spanning stretches (helical) occupy residues 3-23 and 38-58; these read TVYTLVSWLAILGYWLLIAGV and MAWLLIIYILPLVGIIAYLAV. 2 PLD phosphodiesterase domains span residues 219–246 and 399–426; these read MDLRQHRKMIMIDNYIAYTGSMNMVDPR and EGGLLHTKSVLVDGELSLVGTVNLDMRS. Residues histidine 224, lysine 226, aspartate 231, histidine 404, lysine 406, and aspartate 411 contribute to the active site.

This sequence belongs to the phospholipase D family. Cardiolipin synthase subfamily. ClsA sub-subfamily.

It is found in the cell inner membrane. It carries out the reaction 2 a 1,2-diacyl-sn-glycero-3-phospho-(1'-sn-glycerol) = a cardiolipin + glycerol. Catalyzes the reversible phosphatidyl group transfer from one phosphatidylglycerol molecule to another to form cardiolipin (CL) (diphosphatidylglycerol) and glycerol. The protein is Cardiolipin synthase A of Shigella flexneri.